We begin with the raw amino-acid sequence, 145 residues long: Arginine repressor (145 aa).

It belongs to the ArgR family.

It localises to the cytoplasm. It functions in the pathway amino-acid biosynthesis; L-arginine biosynthesis [regulation]. Regulates arginine biosynthesis genes. The sequence is that of Arginine repressor from Streptococcus pyogenes serotype M6 (strain ATCC BAA-946 / MGAS10394).